The chain runs to 343 residues: 3-isopropylmalate dehydrogenase (343 aa).

Substrate is bound by residues R94, R104, R128, and D218. Residues D218, D242, and D246 each contribute to the Mg(2+) site. 278–290 (GSAPDIAGQNKAN) contacts NAD(+).

The protein belongs to the isocitrate and isopropylmalate dehydrogenases family. LeuB type 2 subfamily. In terms of assembly, homodimer. Requires Mg(2+) as cofactor. Mn(2+) is required as a cofactor.

The protein localises to the cytoplasm. The enzyme catalyses (2R,3S)-3-isopropylmalate + NAD(+) = 4-methyl-2-oxopentanoate + CO2 + NADH. It participates in amino-acid biosynthesis; L-leucine biosynthesis; L-leucine from 3-methyl-2-oxobutanoate: step 3/4. In terms of biological role, catalyzes the oxidation of 3-carboxy-2-hydroxy-4-methylpentanoate (3-isopropylmalate) to 3-carboxy-4-methyl-2-oxopentanoate. The product decarboxylates to 4-methyl-2 oxopentanoate. The chain is 3-isopropylmalate dehydrogenase from Bifidobacterium longum subsp. infantis (strain ATCC 15697 / DSM 20088 / JCM 1222 / NCTC 11817 / S12).